Here is a 348-residue protein sequence, read N- to C-terminus: Serpentine receptor class beta-7 (348 aa).

7 helical membrane passes run 31-51 (QLIMLFSSLFPLTYFILFQLL), 63-83 (LVGYFGAILVFSVVFLVEAFI), 107-127 (GNLLGCLLMTIPTFFPISITF), 145-165 (FLGPILAIFLVLLDLFLILLI), 191-211 (MFFIMMLILNSFNFFFSFLLL), 241-261 (ISVIFVHVTFFGSYTTITILL), and 280-300 (GAFMTMISSYNFAVGVASVYF).

This sequence belongs to the nematode receptor-like protein srb family.

It localises to the membrane. The chain is Serpentine receptor class beta-7 (srb-7) from Caenorhabditis elegans.